Consider the following 368-residue polypeptide: Probable endopolygalacturonase I (368 aa).

A signal peptide spans 1–18 (MRSVEILGLAALGSLVAA). The propeptide occupies 19 to 31 (APSPSRVSNSAKK). A disulfide bond links cysteine 35 and cysteine 50. PbH1 repeat units follow at residues 162–192 (ATNLQLTDITIDNSDGDENGGHNTDAFDIGE) and 193–214 (SNGVYIRGAVVKNQDDCIAINS). Aspartate 207 (proton donor) is an active-site residue. Residues cysteine 209 and cysteine 225 are joined by a disulfide bond. The active site involves histidine 229. PbH1 repeat units follow at residues 244-265 (VKNVTITDSTISDSDNGVRIKT), 273-295 (VGDVTYSNIKLSNIAKYGIVIEQ), and 307-328 (TTGVPITGLTIDGITGSVASNA). Asparagine 246 carries N-linked (GlcNAc...) asparagine glycosylation. Disulfide bonds link cysteine 335/cysteine 340 and cysteine 359/cysteine 368.

This sequence belongs to the glycosyl hydrolase 28 family.

The protein resides in the secreted. It carries out the reaction (1,4-alpha-D-galacturonosyl)n+m + H2O = (1,4-alpha-D-galacturonosyl)n + (1,4-alpha-D-galacturonosyl)m.. Involved in maceration and soft-rotting of plant tissue. Hydrolyzes the 1,4-alpha glycosidic bonds of de-esterified pectate in the smooth region of the plant cell wall. The polypeptide is Probable endopolygalacturonase I (pgaI) (Aspergillus clavatus (strain ATCC 1007 / CBS 513.65 / DSM 816 / NCTC 3887 / NRRL 1 / QM 1276 / 107)).